The primary structure comprises 151 residues: SsrA-binding protein (151 aa).

This sequence belongs to the SmpB family.

The protein resides in the cytoplasm. Functionally, required for rescue of stalled ribosomes mediated by trans-translation. Binds to transfer-messenger RNA (tmRNA), required for stable association of tmRNA with ribosomes. tmRNA and SmpB together mimic tRNA shape, replacing the anticodon stem-loop with SmpB. tmRNA is encoded by the ssrA gene; the 2 termini fold to resemble tRNA(Ala) and it encodes a 'tag peptide', a short internal open reading frame. During trans-translation Ala-aminoacylated tmRNA acts like a tRNA, entering the A-site of stalled ribosomes, displacing the stalled mRNA. The ribosome then switches to translate the ORF on the tmRNA; the nascent peptide is terminated with the 'tag peptide' encoded by the tmRNA and targeted for degradation. The ribosome is freed to recommence translation, which seems to be the essential function of trans-translation. The sequence is that of SsrA-binding protein from Campylobacter fetus subsp. fetus (strain 82-40).